We begin with the raw amino-acid sequence, 527 residues long: Cytochrome P450 monooxygenase aba2 (527 aa).

Residues 26-46 (TTVAVLVTVALIAQVLWKIFF) form a helical membrane-spanning segment. N-linked (GlcNAc...) asparagine glycans are attached at residues asparagine 189, asparagine 420, and asparagine 448. Cysteine 460 serves as a coordination point for heme. Residue asparagine 464 is glycosylated (N-linked (GlcNAc...) asparagine).

This sequence belongs to the cytochrome P450 family. The cofactor is heme.

It is found in the membrane. Its pathway is hormone biosynthesis. Cytochrome P450 monooxygenase; part of the gene cluster that mediates the biosynthesis of abscisic acid (ABA), a phytohormone that acts antagonistically toward salicylic acid (SA), jasmonic acid (JA) and ethylene (ETH) signaling, to impede plant defense responses. The first step of the pathway catalyzes the reaction from farnesyl diphosphate to alpha-ionylideneethane performed by the alpha-ionylideneethane synthase aba3 via a three-step reaction mechanism involving 2 neutral intermediates, beta-farnesene and allofarnesene. The cytochrome P450 monooxygenase aba1 might then be involved in the conversion of alpha-ionylideneethane to alpha-ionylideneacetic acid. Alpha-ionylideneacetic acid is further converted to abscisic acid in 2 steps involving the cytochrome P450 monooxygenase aba2 and the short-chain dehydrogenase/reductase aba4, via the intermediates 1'-deoxy-ABA or 1',4'-trans-diol-ABA, depending on the order of action of these 2 enzymes. Aba2 is responsible for the hydroxylation of carbon atom C-1' and aba4 might be involved in the oxidation of the C-4' carbon atom. The sequence is that of Cytochrome P450 monooxygenase aba2 (aba2) from Botryotinia fuckeliana (strain B05.10) (Noble rot fungus).